A 91-amino-acid chain; its full sequence is Cell division topological specificity factor (91 aa).

This sequence belongs to the MinE family.

In terms of biological role, prevents the cell division inhibition by proteins MinC and MinD at internal division sites while permitting inhibition at polar sites. This ensures cell division at the proper site by restricting the formation of a division septum at the midpoint of the long axis of the cell. In Gloeobacter violaceus (strain ATCC 29082 / PCC 7421), this protein is Cell division topological specificity factor.